Reading from the N-terminus, the 180-residue chain is ATP-dependent Clp protease proteolytic subunit 2 (180 aa).

The Nucleophile role is filled by Ser86. His111 is an active-site residue.

Belongs to the peptidase S14 family. Fourteen ClpP subunits assemble into 2 heptameric rings which stack back to back to give a disk-like structure with a central cavity, resembling the structure of eukaryotic proteasomes.

The protein resides in the cytoplasm. The catalysed reaction is Hydrolysis of proteins to small peptides in the presence of ATP and magnesium. alpha-casein is the usual test substrate. In the absence of ATP, only oligopeptides shorter than five residues are hydrolyzed (such as succinyl-Leu-Tyr-|-NHMec, and Leu-Tyr-Leu-|-Tyr-Trp, in which cleavage of the -Tyr-|-Leu- and -Tyr-|-Trp bonds also occurs).. Its function is as follows. Cleaves peptides in various proteins in a process that requires ATP hydrolysis. Has a chymotrypsin-like activity. Plays a major role in the degradation of misfolded proteins. This Tropheryma whipplei (strain Twist) (Whipple's bacillus) protein is ATP-dependent Clp protease proteolytic subunit 2.